The following is a 196-amino-acid chain: Somatotropin (196 aa).

An N-terminal signal peptide occupies residues 1–18; the sequence is MEKVVLLLSVLSLGVVCP. Gln19 is subject to Pyrrolidone carboxylic acid. His35 is a binding site for Zn(2+). Cys69 and Cys169 are joined by a disulfide. Zn(2+) is bound at residue Glu178. Cys186 and Cys194 are joined by a disulfide.

Belongs to the somatotropin/prolactin family.

Its subcellular location is the secreted. Growth hormone plays an important role in growth control and is involved in the regulation of several anabolic processes. Implicated as an osmoregulatory substance important for seawater adaptation. The protein is Somatotropin (gh) of Siganus guttatus (Orange-spotted spinefoot).